The chain runs to 344 residues: Arginase 2, chloroplastic/mitochondrial (344 aa).

The N-terminal 26 residues, 1–26 (MWKIGQRGVPYFQRLIAAPFTTLRSL), are a transit peptide targeting the chloroplast and mitochondrion. Residues H163, D187, H189, and D191 each coordinate Mn(2+). Residues 189-193 (HPDIY), 197-199 (EGN), and N228 contribute to the substrate site. Mn(2+) is bound by residues D272 and D274. E315 lines the substrate pocket.

Belongs to the arginase family. It depends on Mn(2+) as a cofactor. In terms of tissue distribution, expressed in vasculature of roots, root tips, leaves and cotyledons.

The protein resides in the mitochondrion. Its subcellular location is the plastid. It is found in the chloroplast. The catalysed reaction is L-arginine + H2O = urea + L-ornithine. It catalyses the reaction agmatine + H2O = urea + putrescine. The protein operates within nitrogen metabolism; urea cycle; L-ornithine and urea from L-arginine: step 1/1. Its pathway is amine and polyamine biosynthesis; putrescine biosynthesis via agmatine pathway; putrescine from agmatine: step 1/1. In terms of biological role, catalyzes the hydrolysis of L-arginine to urea and L-ornithine. The latter can be utilized in the urea cycle or as a precursor for the synthesis of both polyamines and proline. Possesses agmatinase activity. Catalyzes the formation of putrescine from agmatine. The sequence is that of Arginase 2, chloroplastic/mitochondrial (ARGAH2) from Arabidopsis thaliana (Mouse-ear cress).